We begin with the raw amino-acid sequence, 465 residues long: Cysteine--tRNA ligase (465 aa).

Cysteine 30 is a binding site for Zn(2+). A 'HIGH' region motif is present at residues 32-42 (ITVYDYCHIGH). Residues cysteine 214, histidine 239, and glutamate 243 each contribute to the Zn(2+) site. The 'KMSKS' region motif lies at 271–275 (KMSKS). Lysine 274 contacts ATP.

Belongs to the class-I aminoacyl-tRNA synthetase family. In terms of assembly, monomer. Zn(2+) is required as a cofactor.

The protein localises to the cytoplasm. The catalysed reaction is tRNA(Cys) + L-cysteine + ATP = L-cysteinyl-tRNA(Cys) + AMP + diphosphate. This Burkholderia mallei (strain NCTC 10229) protein is Cysteine--tRNA ligase.